Reading from the N-terminus, the 310-residue chain is Tagatose-6-phosphate kinase (310 aa).

This sequence belongs to the carbohydrate kinase PfkB family. LacC subfamily.

It carries out the reaction D-tagatofuranose 6-phosphate + ATP = D-tagatofuranose 1,6-bisphosphate + ADP + H(+). Its pathway is carbohydrate metabolism; D-tagatose 6-phosphate degradation; D-glyceraldehyde 3-phosphate and glycerone phosphate from D-tagatose 6-phosphate: step 1/2. The polypeptide is Tagatose-6-phosphate kinase (Streptococcus uberis (strain ATCC BAA-854 / 0140J)).